The primary structure comprises 84 residues: Large ribosomal subunit protein bL27 (84 aa).

The segment at 1 to 20 is disordered; sequence MAHKKSGGASRNGRDSNPKY.

Belongs to the bacterial ribosomal protein bL27 family.

The polypeptide is Large ribosomal subunit protein bL27 (Dictyoglomus thermophilum (strain ATCC 35947 / DSM 3960 / H-6-12)).